Consider the following 168-residue polypeptide: S-ribosylhomocysteine lyase (168 aa).

3 residues coordinate Fe cation: His54, His58, and Cys128.

The protein belongs to the LuxS family. As to quaternary structure, homodimer. Fe cation serves as cofactor.

The catalysed reaction is S-(5-deoxy-D-ribos-5-yl)-L-homocysteine = (S)-4,5-dihydroxypentane-2,3-dione + L-homocysteine. Its function is as follows. Involved in the synthesis of autoinducer 2 (AI-2) which is secreted by bacteria and is used to communicate both the cell density and the metabolic potential of the environment. The regulation of gene expression in response to changes in cell density is called quorum sensing. Catalyzes the transformation of S-ribosylhomocysteine (RHC) to homocysteine (HC) and 4,5-dihydroxy-2,3-pentadione (DPD). This Neisseria meningitidis serogroup C / serotype 2a (strain ATCC 700532 / DSM 15464 / FAM18) protein is S-ribosylhomocysteine lyase.